The sequence spans 679 residues: Enzymatic polyprotein (679 aa).

Residues Leu40–Asp130 form a protease region. Asp45 is an active-site residue. The region spanning Leu272–Ile452 is the Reverse transcriptase domain.

Belongs to the caulimoviridae enzymatic polyprotein family.

It carries out the reaction DNA(n) + a 2'-deoxyribonucleoside 5'-triphosphate = DNA(n+1) + diphosphate. In terms of biological role, encodes for at least two polypeptides: protease (PR) and reverse transcriptase (RT). The protease processes the polyprotein in cis. Reverse transcriptase is multifunctional enzyme that converts the viral RNA genome into dsDNA in viral cytoplasmic capsids. This enzyme displays a DNA polymerase activity that can copy either DNA or RNA templates, and a ribonuclease H (RNase H) activity that cleaves the RNA strand of RNA-DNA heteroduplexes in a partially processive 3'- to 5'-endonucleasic mode. Neo-synthesized pregenomic RNA (pgRNA) are encapsidated, and reverse-transcribed inside the nucleocapsid. Partial (+)DNA is synthesized from the (-)DNA template and generates the relaxed circular DNA (RC-DNA) genome. After budding and infection, the RC-DNA migrates in the nucleus, and is converted into a plasmid-like covalently closed circular DNA (cccDNA). This is Enzymatic polyprotein from Cauliflower mosaic virus (strain CM-1841) (CaMV).